A 554-amino-acid chain; its full sequence is Hydroxylamine reductase (554 aa).

4 residues coordinate [2Fe-2S] cluster: cysteine 3, cysteine 6, cysteine 18, and cysteine 25. 8 residues coordinate hybrid [4Fe-2O-2S] cluster: histidine 252, glutamate 276, cysteine 320, cysteine 408, cysteine 436, cysteine 461, glutamate 495, and lysine 497. Cysteine persulfide is present on cysteine 408.

The protein belongs to the HCP family. [2Fe-2S] cluster serves as cofactor. The cofactor is hybrid [4Fe-2O-2S] cluster.

The protein localises to the cytoplasm. It carries out the reaction A + NH4(+) + H2O = hydroxylamine + AH2 + H(+). Catalyzes the reduction of hydroxylamine to form NH(3) and H(2)O. The chain is Hydroxylamine reductase from Shewanella baltica (strain OS155 / ATCC BAA-1091).